The chain runs to 102 residues: Small ribosomal subunit protein uS10 (102 aa).

The protein belongs to the universal ribosomal protein uS10 family. Part of the 30S ribosomal subunit.

In terms of biological role, involved in the binding of tRNA to the ribosomes. The sequence is that of Small ribosomal subunit protein uS10 from Thiobacillus denitrificans (strain ATCC 25259 / T1).